A 222-amino-acid polypeptide reads, in one-letter code: Histone H1.5 (222 aa).

Residues 1 to 16 show a composition bias toward low complexity; sequence MSETAPAETTAPAPVE. Residues 1–55 form a disordered region; that stretch reads MSETAPAETTAPAPVEKSPAKKKTKKAGAAKRKATGPPVSELITKAVSASKERGG. S2 carries the post-translational modification N-acetylserine. At S2 the chain carries Phosphoserine. An N6-acetyllysine modification is found at K17. A Phosphoserine modification is found at S18. Positions 20 to 34 are enriched in basic residues; sequence AKKKTKKAGAAKRKA. K26 is subject to N6-methyllysine. N6-(beta-hydroxybutyryl)lysine; alternate is present on K33. K33 bears the N6-succinyllysine; alternate mark. Position 35 is a phosphothreonine (T35). In terms of domain architecture, H15 spans 35–108; that stretch reads TGPPVSELIT…GASGSFKLNK (74 aa). K45 carries the post-translational modification N6-acetyllysine. An N6-(beta-hydroxybutyryl)lysine modification is found at K51. R53 is modified (citrulline). K63 carries the N6-(beta-hydroxybutyryl)lysine modification. K74 carries the N6-acetyllysine modification. 3 positions are modified to N6-(beta-hydroxybutyryl)lysine: K84, K89, and K105. The disordered stretch occupies residues 94–222; the sequence is QTKGTGASGS…KVKKAVSKKK (129 aa). Over residues 118 to 129 the composition is skewed to basic residues; it reads KAKKTGAAKAKK. Residues T134 and T151 each carry the phosphothreonine modification. Over residues 136 to 157 the composition is skewed to basic residues; the sequence is KKPKKTAGAKKTVKKTPKKAKK. K164 bears the N6-acetyllysine mark. Positions 165-183 are enriched in basic residues; sequence KVTKSPKKAKAAAKPKKAT. S169 and S185 each carry phosphoserine. The segment covering 190–222 has biased composition (basic residues); sequence KAVKSKASKPKVTKPKAAKPKAAKVKKAVSKKK.

The protein belongs to the histone H1/H5 family. In terms of assembly, interacts with MSX1. Post-translationally, H1 histones are progressively phosphorylated during the cell cycle, becoming maximally phosphorylated during late G2 phase and M phase, and being dephosphorylated sharply thereafter. In terms of processing, citrullination at Arg-53 (H1R54ci) by PADI4 takes place within the DNA-binding site of H1 and results in its displacement from chromatin and global chromatin decondensation, thereby promoting pluripotency and stem cell maintenance.

The protein localises to the nucleus. The protein resides in the chromosome. In terms of biological role, histone H1 protein binds to linker DNA between nucleosomes forming the macromolecular structure known as the chromatin fiber. Histones H1 are necessary for the condensation of nucleosome chains into higher-order structured fibers. Also acts as a regulator of individual gene transcription through chromatin remodeling, nucleosome spacing and DNA methylation. The polypeptide is Histone H1.5 (H1-5) (Rattus norvegicus (Rat)).